Reading from the N-terminus, the 211-residue chain is Uracil phosphoribosyltransferase (211 aa).

Residues arginine 81, arginine 106, and 133-141 each bind 5-phospho-alpha-D-ribose 1-diphosphate; that span reads DPMLATGNS. Residues isoleucine 196 and 201–203 each bind uracil; that span reads GDA. Aspartate 202 serves as a coordination point for 5-phospho-alpha-D-ribose 1-diphosphate.

It belongs to the UPRTase family. The cofactor is Mg(2+).

The enzyme catalyses UMP + diphosphate = 5-phospho-alpha-D-ribose 1-diphosphate + uracil. It functions in the pathway pyrimidine metabolism; UMP biosynthesis via salvage pathway; UMP from uracil: step 1/1. With respect to regulation, allosterically activated by GTP. Its function is as follows. Catalyzes the conversion of uracil and 5-phospho-alpha-D-ribose 1-diphosphate (PRPP) to UMP and diphosphate. The protein is Uracil phosphoribosyltransferase of Paracoccus denitrificans (strain Pd 1222).